Consider the following 185-residue polypeptide: GTP-binding protein rhb1 (185 aa).

GTP-binding residues include S16, G18, K19, S20, S21, V32, Y35, T38, N119, D122, and A150. S20 serves as a coordination point for Mg(2+). The Effector region signature appears at 35–43; sequence YYPTIENTF. Residue T38 participates in Mg(2+) binding. A Cysteine methyl ester modification is found at C182. The S-farnesyl cysteine moiety is linked to residue C182. Positions 183–185 are cleaved as a propeptide — removed in mature form; the sequence is VIA.

The protein belongs to the small GTPase superfamily. Rheb family.

Its subcellular location is the cell membrane. It catalyses the reaction GTP + H2O = GDP + phosphate + H(+). Functionally, binds GTP and exhibits intrinsic GTPase activity. Regulates entry into stationary phase when extracellular nitrogen levels are adequate for growth. This Schizosaccharomyces pombe (strain 972 / ATCC 24843) (Fission yeast) protein is GTP-binding protein rhb1 (rhb1).